A 493-amino-acid polypeptide reads, in one-letter code: Calcium-binding tyrosine phosphorylation-regulated protein (493 aa).

The RIIa domain maps to 12 to 49 (YGLKTLLEGISRAVLKTNPSNINQFAAAYFQELTMYRG). 4 disordered regions span residues 85–164 (EPGK…VSPE), 244–271 (DLGS…QEPP), 330–354 (NEQS…TTSG), and 426–493 (IVSD…STAE). A compositionally biased stretch (polar residues) spans 90-100 (SVESKVPTQME). The segment covering 101–117 (KSTDTDEDNVTRTEYSD) has biased composition (basic and acidic residues). Positions 141-152 (SSKPATPKTTTP) are enriched in low complexity. Thr-151 is modified (phosphothreonine). A Phosphoserine modification is found at Ser-155. Composition is skewed to polar residues over residues 426–442 (IVSD…NSVP) and 461–470 (SGTSVKSSSG). The segment covering 484–493 (IEPEGESTAE) has biased composition (acidic residues).

Interacts with FSCB. Isoform 3 self-associates. Isoform 3 and isoform 5 interact with GSK3B. Isoform 1 does not interact with GSK3B. Isoform 1 is phosphorylated on tyrosine residues during in vitro capacitation. Isoform 3 and isoform 5 are phosphorylated by GSK3B in vitro. Dephosphorylation affects its ability to bind calcium. In terms of tissue distribution, expressed in elongating spermatids and spermatozoa (at protein level). Isoform 1 is expressed in testis. Isoform 3 and isoform 5 are also expressed in brain, pancreas and numerous brain tumors.

It localises to the cytoplasm. It is found in the cytoskeleton. The protein resides in the cell projection. The protein localises to the cilium. Its subcellular location is the flagellum. It localises to the nucleus. Its function is as follows. May function as a regulator of both motility- and head-associated functions such as capacitation and the acrosome reaction. Isoform 1 binds calcium in vitro. Isoform 2 and isoform 6 probably bind calcium. Isoform 3 and isoform 5 do not bind calcium in vitro. Isoform 4 probably does not bind calcium. This is Calcium-binding tyrosine phosphorylation-regulated protein (CABYR) from Homo sapiens (Human).